Here is a 285-residue protein sequence, read N- to C-terminus: Sulfoquinovosyl glycerol transport system permease protein SmoH (285 aa).

A run of 6 helical transmembrane segments spans residues 21 to 41, 83 to 103, 115 to 135, 150 to 170, 195 to 215, and 250 to 270; these read FIAA…ILFT, FMVA…AAYA, ILSL…VPLF, LILP…VSFF, VVVP…FVNA, and PVIS…IVIF. The 192-residue stretch at 79 to 270 folds into the ABC transmembrane type-1 domain; the sequence is LFNSFMVALL…VPVAILIVIF (192 aa).

This sequence belongs to the binding-protein-dependent transport system permease family. The complex is probably composed of two ATP-binding proteins (SmoE), two transmembrane proteins (SmoG and SmoH) and a solute-binding protein (SmoF).

Its subcellular location is the cell inner membrane. Part of the ABC transporter complex SmoEFGH involved in sulfoquinovosyl glycerol (SQGro) uptake. Responsible for the translocation of the substrate across the membrane. The chain is Sulfoquinovosyl glycerol transport system permease protein SmoH from Agrobacterium fabrum (strain C58 / ATCC 33970) (Agrobacterium tumefaciens (strain C58)).